Reading from the N-terminus, the 398-residue chain is MANKFRTLDDVDVKGKRVLLRVDLNVPMENGRVTDATRLERVAPTITELADKGGKVILLAHFGRPKGRDAKESLKPVTEALSKVLNKPVAFADDCIGEPAATAVAALKDGDILCLENTRFHKEEEKNDPAFVAELAKLGDIWVNDAFSAAHRAHASTEGLGHKLPAYAGRTMQAELDALEKALGSPTKPVIAIIGGAKVSTKIDLLENLVSKVDALVIGGGMANTFLHAQGVGIGKSLAEKDLAPTALRIIEKAEAANCAIILPVDATVAYHFAANAPSHAYGLDAIPADGMILDVGPQSVARVHAAIDDAATLVWNGPLGAFEMQPFDRGTVAAAKHAAERTKAKKLISIAGGGDTVAALNQAHVAGDFTYVSTAGGAFLEWMEGKPLPGVEVLRIK.

Residues 23–25, R38, 61–64, R119, and R152 contribute to the substrate site; these read DLN and HFGR. ATP contacts are provided by residues K202, E324, and 354-357; that span reads GGDT.

The protein belongs to the phosphoglycerate kinase family. In terms of assembly, monomer.

It is found in the cytoplasm. The enzyme catalyses (2R)-3-phosphoglycerate + ATP = (2R)-3-phospho-glyceroyl phosphate + ADP. The protein operates within carbohydrate degradation; glycolysis; pyruvate from D-glyceraldehyde 3-phosphate: step 2/5. This chain is Phosphoglycerate kinase, found in Bradyrhizobium diazoefficiens (strain JCM 10833 / BCRC 13528 / IAM 13628 / NBRC 14792 / USDA 110).